A 256-amino-acid chain; its full sequence is Large ribosomal subunit protein eL8B (256 aa).

The segment at 1 to 37 (MAPGKKVAPAPFGAKSTKSNKAKNPLTHSTPKNFGIG) is disordered.

It belongs to the eukaryotic ribosomal protein eL8 family. Component of the large ribosomal subunit (LSU). Mature yeast ribosomes consist of a small (40S) and a large (60S) subunit. The 40S small subunit contains 1 molecule of ribosomal RNA (18S rRNA) and 33 different proteins (encoded by 57 genes). The large 60S subunit contains 3 rRNA molecules (25S, 5.8S and 5S rRNA) and 46 different proteins (encoded by 81 genes).

The protein localises to the cytoplasm. In terms of biological role, component of the ribosome, a large ribonucleoprotein complex responsible for the synthesis of proteins in the cell. The small ribosomal subunit (SSU) binds messenger RNAs (mRNAs) and translates the encoded message by selecting cognate aminoacyl-transfer RNA (tRNA) molecules. The large subunit (LSU) contains the ribosomal catalytic site termed the peptidyl transferase center (PTC), which catalyzes the formation of peptide bonds, thereby polymerizing the amino acids delivered by tRNAs into a polypeptide chain. The nascent polypeptides leave the ribosome through a tunnel in the LSU and interact with protein factors that function in enzymatic processing, targeting, and the membrane insertion of nascent chains at the exit of the ribosomal tunnel. The polypeptide is Large ribosomal subunit protein eL8B (Saccharomyces cerevisiae (strain ATCC 204508 / S288c) (Baker's yeast)).